The following is a 175-amino-acid chain: Tumor necrosis factor receptor superfamily member 13C (175 aa).

The Extracellular segment spans residues 1–71; the sequence is MGARRLRVRS…EGSALRPDVA (71 aa). The TNFR-Cys; truncated repeat unit spans residues 21 to 38; it reads QCNQTECFDPLVRNCVSC. 2 disulfide bridges follow: Cys-22–Cys-35 and Cys-27–Cys-38. An N-linked (GlcNAc...) asparagine glycan is attached at Asn-23. Residues 29 to 34 form an essential for TNFSF13B/TALL1/BAFF/BLyS binding region; that stretch reads DPLVRN. The helical; Signal-anchor for type III membrane protein transmembrane segment at 72–92 threads the bilayer; the sequence is LLVGAPALLGLILALTLVGLV. The Cytoplasmic portion of the chain corresponds to 93 to 175; the sequence is SLVSWRWRQQ…VTTKTAGPEQ (83 aa). The interval 124–175 is disordered; sequence VPSSETPHASAPTWPPLKEDADSALPRHSVPVPATELGSTELVTTKTAGPEQ. Over residues 160-175 the composition is skewed to polar residues; it reads LGSTELVTTKTAGPEQ.

Highly expressed in spleen and testis; detected at lower levels in lung and thymus.

Its subcellular location is the membrane. B-cell receptor specific for TNFSF13B/TALL1/BAFF/BLyS. Promotes the survival of mature B-cells and the B-cell response. The chain is Tumor necrosis factor receptor superfamily member 13C (Tnfrsf13c) from Mus musculus (Mouse).